The primary structure comprises 80 residues: Clavanin-C (80 aa).

A signal peptide spans 1-19 (MKTTILILLILGLGINAKS). Residues 20–29 (LEERKSEEEK) constitute a propeptide that is removed on maturation. A Phenylalanine amide modification is found at F52. Residues 54–80 (DDQQDNGKFYGHYAEDNGKHWYDTGDQ) constitute a propeptide that is removed on maturation.

As to expression, hemocytes and pharyngeal tissues.

The protein resides in the secreted. Functionally, has antimicrobial activity against E.coli, L.monocytogenes and C.albicans. The chain is Clavanin-C from Styela clava (Sea squirt).